A 223-amino-acid polypeptide reads, in one-letter code: B-cell antigen receptor complex-associated protein alpha chain (223 aa).

An N-terminal signal peptide occupies residues 1-31 (MPEGPQALQSPPATIFLLLISAAGLGPGCQA). Residues 32-120 (LWVEWGPPSV…KIQRSCGTYL (89 aa)) form the Ig-like C2-type domain. Residues 32–140 (LWVEWGPPSV…LDMGEGTKNN (109 aa)) lie on the Extracellular side of the membrane. Residues cysteine 53 and cysteine 104 are joined by a disulfide bond. N-linked (GlcNAc...) asparagine glycosylation is found at asparagine 56, asparagine 61, asparagine 71, and asparagine 95. A helical transmembrane segment spans residues 141-161 (IITAEGIILLICAVVPGTLLL). The Cytoplasmic segment spans residues 162–223 (FRKRWQNMKF…HIGDAQLEKP (62 aa)). Positions 174–202 (DIQDDYEDENLYEGLNLDDCSMYEDISRG) constitute an ITAM domain. Residue tyrosine 185 is modified to Phosphotyrosine; by SRC-type Tyr-kinases. Tyrosine 196 carries the phosphotyrosine modification. Asymmetric dimethylarginine; by PRMT1 is present on arginine 201. The residue at position 207 (tyrosine 207) is a Phosphotyrosine; by Tyr-kinases.

Heterodimer of alpha and beta chains; disulfide-linked. Part of the B-cell antigen receptor complex where the alpha/beta chain heterodimer is non-covalently associated with an antigen-specific membrane-bound surface immunoglobulin of two heavy chains and two light chains. Interacts through its phosphorylated ITAM domain with the SH2 domains of SYK which stimulates SYK autophosphorylation and activation. Also interacts, when phosphorylated on Tyr-207, with the SH2 domain of BLNK/SLP65, bringing BLNK into proximity with SYK and allowing SYK to phosphorylate BLNK which is necessary for trafficking of the BCR to late endosomes. Interacts with Src-family tyrosine kinases including FYN and LYN, increasing their activity. Post-translationally, phosphorylated on tyrosine, serine and threonine residues upon B-cell activation. Phosphorylation of tyrosine residues by Src-family kinases, including LYN, is an early and essential feature of the BCR signaling cascade. The phosphorylated tyrosines serve as docking sites for SH2-domain containing kinases, leading to their activation which in turn leads to phosphorylation of downstream targets. Phosphorylation of serine and threonine residues may prevent subsequent tyrosine phosphorylation. In terms of processing, arginine methylation in the ITAM domain may interfere with the binding of SYK. It promotes signals leading to B-cell differentiation. As to expression, B-cells.

It localises to the cell membrane. Required in cooperation with CD79B for initiation of the signal transduction cascade activated by binding of antigen to the B-cell antigen receptor complex (BCR) which leads to internalization of the complex, trafficking to late endosomes and antigen presentation. Also required for BCR surface expression and for efficient differentiation of pro- and pre-B-cells. Stimulates SYK autophosphorylation and activation. Binds to BLNK, bringing BLNK into proximity with SYK and allowing SYK to phosphorylate BLNK. Also interacts with and increases activity of some Src-family tyrosine kinases. Represses BCR signaling during development of immature B-cells. The chain is B-cell antigen receptor complex-associated protein alpha chain (CD79A) from Bos taurus (Bovine).